The primary structure comprises 246 residues: MRLEGKVCLITGAASGIGKATTLLFAQEGATVIAGDISKENLDSLVKEAEGLPGKVDPYVLNVTDRDQIKEVVEKVVQKYGRIDVLVNNAGITRDALLVRMKEEDWDAVINVNLKGVFNVTQMVVPYMIKQRNGSIVNVSSVVGIYGNPGQTNYAASKAGVIGMTKTWAKELAGRNIRVNAVAPGFIETPMTEKLPEKARETALSRIPLGRFGKPEEVAQVILFLASDESSYVTGQVIGIDGGLVI.

Residues 62–63 and N89 each bind NADP(+); that span reads NV. S141 is a substrate binding site. Y154 acts as the Proton acceptor in catalysis. Residues 154–158 and I187 contribute to the NADP(+) site; that span reads YAASK.

This sequence belongs to the short-chain dehydrogenases/reductases (SDR) family. As to quaternary structure, homotetramer.

The catalysed reaction is a (3R)-hydroxyacyl-[ACP] + NADP(+) = a 3-oxoacyl-[ACP] + NADPH + H(+). Its pathway is lipid metabolism; fatty acid biosynthesis. Catalyzes the NADPH-dependent reduction of beta-ketoacyl-ACP substrates to beta-hydroxyacyl-ACP products, the first reductive step in the elongation cycle of fatty acid biosynthesis. This is 3-oxoacyl-[acyl-carrier-protein] reductase FabG (fabG) from Thermotoga maritima (strain ATCC 43589 / DSM 3109 / JCM 10099 / NBRC 100826 / MSB8).